A 249-amino-acid polypeptide reads, in one-letter code: Phosphoribosylaminoimidazole-succinocarboxamide synthase (249 aa).

This sequence belongs to the SAICAR synthetase family.

The catalysed reaction is 5-amino-1-(5-phospho-D-ribosyl)imidazole-4-carboxylate + L-aspartate + ATP = (2S)-2-[5-amino-1-(5-phospho-beta-D-ribosyl)imidazole-4-carboxamido]succinate + ADP + phosphate + 2 H(+). It participates in purine metabolism; IMP biosynthesis via de novo pathway; 5-amino-1-(5-phospho-D-ribosyl)imidazole-4-carboxamide from 5-amino-1-(5-phospho-D-ribosyl)imidazole-4-carboxylate: step 1/2. The polypeptide is Phosphoribosylaminoimidazole-succinocarboxamide synthase (Roseiflexus sp. (strain RS-1)).